We begin with the raw amino-acid sequence, 278 residues long: MLEIAGKKFDSHLIMGTGGATSQTLLEKALVASGTQLTTVAMRRFRAGNNTGTAGTSSGAAGGESVFGLLNRLGIDVLPNTAGCRTAKDAILTAQLAREALGTNWVKLELIADDRTLLPDVVELVDTCEMLVAEGFEVLAYTSDDPVVAKRLEDAGAAAVMPLGSPIGTGLGILNPHNIELICARASVPVLLDAGVGTASDAALAMELGCSGVLLASAVNRCQDPAAMATAMKHAVEAGRLAAAAGRIPQRTHAEGALASSSFEGLASWDEDWAEEVL.

Residue Lys107 is the Schiff-base intermediate with DXP of the active site. Residues Gly168, 194-195 (AG), and 216-217 (AS) contribute to the 1-deoxy-D-xylulose 5-phosphate site.

It belongs to the ThiG family. In terms of assembly, homotetramer. Forms heterodimers with either ThiH or ThiS.

Its subcellular location is the cytoplasm. It carries out the reaction [ThiS sulfur-carrier protein]-C-terminal-Gly-aminoethanethioate + 2-iminoacetate + 1-deoxy-D-xylulose 5-phosphate = [ThiS sulfur-carrier protein]-C-terminal Gly-Gly + 2-[(2R,5Z)-2-carboxy-4-methylthiazol-5(2H)-ylidene]ethyl phosphate + 2 H2O + H(+). Its pathway is cofactor biosynthesis; thiamine diphosphate biosynthesis. Functionally, catalyzes the rearrangement of 1-deoxy-D-xylulose 5-phosphate (DXP) to produce the thiazole phosphate moiety of thiamine. Sulfur is provided by the thiocarboxylate moiety of the carrier protein ThiS. In vitro, sulfur can be provided by H(2)S. The chain is Thiazole synthase from Corynebacterium urealyticum (strain ATCC 43042 / DSM 7109).